We begin with the raw amino-acid sequence, 289 residues long: 33 kDa chaperonin (289 aa).

Cystine bridges form between Cys-225/Cys-227 and Cys-258/Cys-261.

It belongs to the HSP33 family. In terms of processing, under oxidizing conditions two disulfide bonds are formed involving the reactive cysteines. Under reducing conditions zinc is bound to the reactive cysteines and the protein is inactive.

It is found in the cytoplasm. In terms of biological role, redox regulated molecular chaperone. Protects both thermally unfolding and oxidatively damaged proteins from irreversible aggregation. Plays an important role in the bacterial defense system toward oxidative stress. The protein is 33 kDa chaperonin of Nitrosococcus oceani (strain ATCC 19707 / BCRC 17464 / JCM 30415 / NCIMB 11848 / C-107).